A 327-amino-acid chain; its full sequence is L-lactate dehydrogenase (327 aa).

NAD(+) contacts are provided by residues Val18, Asp39, Lys44, Tyr69, and 83 to 84; that span reads GA. Substrate contacts are provided by residues Gln86, Arg92, and 124 to 127; that span reads NPVD. Residues 122-124 and Ser147 contribute to the NAD(+) site; that span reads AAN. Substrate is bound at residue 152 to 155; sequence DSAR. Residues Arg157 and His172 each coordinate beta-D-fructose 1,6-bisphosphate. Catalysis depends on His179, which acts as the Proton acceptor. Tyr224 carries the phosphotyrosine modification. Thr233 serves as a coordination point for substrate.

The protein belongs to the LDH/MDH superfamily. LDH family. Homotetramer.

The protein localises to the cytoplasm. The enzyme catalyses (S)-lactate + NAD(+) = pyruvate + NADH + H(+). It functions in the pathway fermentation; pyruvate fermentation to lactate; (S)-lactate from pyruvate: step 1/1. With respect to regulation, allosterically activated by fructose 1,6-bisphosphate (FBP). In terms of biological role, catalyzes the conversion of lactate to pyruvate. The polypeptide is L-lactate dehydrogenase (Streptococcus pyogenes serotype M3 (strain SSI-1)).